The following is a 410-amino-acid chain: F-box/WD-40 repeat-containing protein 1 (410 aa).

One can recognise an F-box domain in the interval 32–79 (SKECSLLPFELFEEILCRVPTKSLLRLKLTCKRWLALFNDKRFIYKHL). WD repeat units follow at residues 109-150 (PNKF…VRWI) and 269-309 (DVHN…NGVS).

The polypeptide is F-box/WD-40 repeat-containing protein 1 (FBW1) (Arabidopsis thaliana (Mouse-ear cress)).